A 430-amino-acid polypeptide reads, in one-letter code: Asparagine--tRNA ligase (430 aa).

The protein belongs to the class-II aminoacyl-tRNA synthetase family. In terms of assembly, homodimer.

The protein localises to the cytoplasm. The catalysed reaction is tRNA(Asn) + L-asparagine + ATP = L-asparaginyl-tRNA(Asn) + AMP + diphosphate + H(+). The sequence is that of Asparagine--tRNA ligase from Oceanobacillus iheyensis (strain DSM 14371 / CIP 107618 / JCM 11309 / KCTC 3954 / HTE831).